We begin with the raw amino-acid sequence, 466 residues long: Glutamate decarboxylase beta (466 aa).

2 residues coordinate substrate: Thr62 and Asn83. Residues Ser126–Ser127, Thr212, and His275 each bind pyridoxal 5'-phosphate. N6-(pyridoxal phosphate)lysine is present on Lys276. An N6-acetyllysine mark is found at Lys446, Lys453, and Lys464.

Belongs to the group II decarboxylase family. In terms of assembly, homohexamer composed of three dimers. Pyridoxal 5'-phosphate is required as a cofactor.

It catalyses the reaction L-glutamate + H(+) = 4-aminobutanoate + CO2. In terms of biological role, converts glutamate to gamma-aminobutyrate (GABA), consuming one intracellular proton in the reaction. The gad system helps to maintain a near-neutral intracellular pH when cells are exposed to extremely acidic conditions. The ability to survive transit through the acidic conditions of the stomach is essential for successful colonization of the mammalian host by commensal and pathogenic bacteria. This is Glutamate decarboxylase beta (gadB) from Escherichia coli O6:H1 (strain CFT073 / ATCC 700928 / UPEC).